The following is a 965-amino-acid chain: UvrABC system protein A (965 aa).

32–39 (GLSGSGKS) is an ATP binding site. Residues 254–281 (CPVCDYSLPELEPRLFSFNAPMGACPAC) form a C4-type zinc finger. ABC transporter domains lie at 311-588 (WDRR…PRSL) and 608-937 (PNAT…HFLA). Residue 641 to 648 (GVSGSGKS) coordinates ATP. The C4-type zinc finger occupies 740 to 766 (CEACEGDGLIKVEMHFLPDVYVPCDVC).

The protein belongs to the ABC transporter superfamily. UvrA family. In terms of assembly, forms a heterotetramer with UvrB during the search for lesions.

The protein localises to the cytoplasm. Functionally, the UvrABC repair system catalyzes the recognition and processing of DNA lesions. UvrA is an ATPase and a DNA-binding protein. A damage recognition complex composed of 2 UvrA and 2 UvrB subunits scans DNA for abnormalities. When the presence of a lesion has been verified by UvrB, the UvrA molecules dissociate. In Xylella fastidiosa (strain 9a5c), this protein is UvrABC system protein A.